The primary structure comprises 393 residues: O-phospho-L-seryl-tRNA:Cys-tRNA synthase 1 (393 aa).

Pyridoxal 5'-phosphate-binding positions include 85 to 86, asparagine 190, and 213 to 215; these read AR and SGH. Lysine 216 is subject to N6-(pyridoxal phosphate)lysine.

The protein belongs to the SepCysS family. In terms of assembly, homodimer. Interacts with SepRS. It depends on pyridoxal 5'-phosphate as a cofactor.

It catalyses the reaction O-phospho-L-seryl-tRNA(Cys) + hydrogen sulfide + H(+) = L-cysteinyl-tRNA(Cys) + phosphate. Its function is as follows. Converts O-phospho-L-seryl-tRNA(Cys) (Sep-tRNA(Cys)) to L-cysteinyl-tRNA(Cys) (Cys-tRNA(Cys)). The polypeptide is O-phospho-L-seryl-tRNA:Cys-tRNA synthase 1 (Methanospirillum hungatei JF-1 (strain ATCC 27890 / DSM 864 / NBRC 100397 / JF-1)).